Consider the following 199-residue polypeptide: Thioredoxin reductase-like selenoprotein T (199 aa).

Positions 1–24 are cleaved as a signal peptide; it reads MRAAGLGLGIGLLLLAALAGPGGS. Positions 50–53 form a cross-link, cysteinyl-selenocysteine (Cys-Sec); sequence CVSU. Residue Sec-53 is a non-standard amino acid, selenocysteine. A helical membrane pass occupies residues 95–115; sequence VFKLVLIGLIIVGKDPFAFFG.

The protein belongs to the SelWTH family. Selenoprotein T subfamily. May contain a selenide-sulfide bond between Cys-50 and Sec-53. This bond is speculated to serve as redox-active pair.

It is found in the endoplasmic reticulum membrane. The enzyme catalyses [thioredoxin]-dithiol + NADP(+) = [thioredoxin]-disulfide + NADPH + H(+). In terms of biological role, selenoprotein with thioredoxin reductase-like oxidoreductase activity. This is Thioredoxin reductase-like selenoprotein T from Gallus gallus (Chicken).